The chain runs to 147 residues: SsrA-binding protein (147 aa).

Belongs to the SmpB family.

Its subcellular location is the cytoplasm. Required for rescue of stalled ribosomes mediated by trans-translation. Binds to transfer-messenger RNA (tmRNA), required for stable association of tmRNA with ribosomes. tmRNA and SmpB together mimic tRNA shape, replacing the anticodon stem-loop with SmpB. tmRNA is encoded by the ssrA gene; the 2 termini fold to resemble tRNA(Ala) and it encodes a 'tag peptide', a short internal open reading frame. During trans-translation Ala-aminoacylated tmRNA acts like a tRNA, entering the A-site of stalled ribosomes, displacing the stalled mRNA. The ribosome then switches to translate the ORF on the tmRNA; the nascent peptide is terminated with the 'tag peptide' encoded by the tmRNA and targeted for degradation. The ribosome is freed to recommence translation, which seems to be the essential function of trans-translation. The polypeptide is SsrA-binding protein (Thermosipho melanesiensis (strain DSM 12029 / CIP 104789 / BI429)).